Consider the following 383-residue polypeptide: ATP phosphoribosyltransferase regulatory subunit (383 aa).

The protein belongs to the class-II aminoacyl-tRNA synthetase family. HisZ subfamily. In terms of assembly, heteromultimer composed of HisG and HisZ subunits.

The protein localises to the cytoplasm. It functions in the pathway amino-acid biosynthesis; L-histidine biosynthesis; L-histidine from 5-phospho-alpha-D-ribose 1-diphosphate: step 1/9. Functionally, required for the first step of histidine biosynthesis. May allow the feedback regulation of ATP phosphoribosyltransferase activity by histidine. The sequence is that of ATP phosphoribosyltransferase regulatory subunit from Neisseria meningitidis serogroup C (strain 053442).